The following is a 733-amino-acid chain: ATP-dependent RNA helicase DBP7 (733 aa).

Disordered regions lie at residues methionine 1–isoleucine 92 and serine 119–proline 139. Residues serine 17–valine 30 show a composition bias toward polar residues. Basic and acidic residues predominate over residues glutamine 52–threonine 80. The Q motif signature appears at serine 144 to lysine 173. Residues proline 177–isoleucine 372 form the Helicase ATP-binding domain. Residue alanine 190–threonine 197 participates in ATP binding. A DEAD box motif is present at residues aspartate 304–aspartate 307. Residues threonine 406–phenylalanine 596 form the Helicase C-terminal domain. Residues lysine 687 to lysine 714 form a disordered region.

It belongs to the DEAD box helicase family. DDX31/DBP7 subfamily.

It localises to the nucleus. The protein resides in the nucleolus. It catalyses the reaction ATP + H2O = ADP + phosphate + H(+). Its function is as follows. ATP-binding RNA helicase involved in the biogenesis of 60S ribosomal subunits and is required for the normal formation of 25S and 5.8S rRNAs. The sequence is that of ATP-dependent RNA helicase DBP7 (DPB7) from Scheffersomyces stipitis (strain ATCC 58785 / CBS 6054 / NBRC 10063 / NRRL Y-11545) (Yeast).